Here is a 493-residue protein sequence, read N- to C-terminus: Glutamyl-tRNA(Gln) amidotransferase subunit A (493 aa).

Residues Lys79 and Ser159 each act as charge relay system in the active site. Ser183 acts as the Acyl-ester intermediate in catalysis.

This sequence belongs to the amidase family. GatA subfamily. Heterotrimer of A, B and C subunits.

The enzyme catalyses L-glutamyl-tRNA(Gln) + L-glutamine + ATP + H2O = L-glutaminyl-tRNA(Gln) + L-glutamate + ADP + phosphate + H(+). Allows the formation of correctly charged Gln-tRNA(Gln) through the transamidation of misacylated Glu-tRNA(Gln) in organisms which lack glutaminyl-tRNA synthetase. The reaction takes place in the presence of glutamine and ATP through an activated gamma-phospho-Glu-tRNA(Gln). This is Glutamyl-tRNA(Gln) amidotransferase subunit A from Sinorhizobium medicae (strain WSM419) (Ensifer medicae).